Here is a 116-residue protein sequence, read N- to C-terminus: Large ribosomal subunit protein P2 (116 aa).

The interval 60-116 is disordered; it reads GKLSSMPSGGGVAAAAGGGGAAAGGGGAAPAAEEKKEEKKEESEEESDDDMGFGLFD. The segment covering 67–87 has biased composition (gly residues); that stretch reads SGGGVAAAAGGGGAAAGGGGA. Positions 91 to 101 are enriched in basic and acidic residues; the sequence is AEEKKEEKKEE.

The protein belongs to the eukaryotic ribosomal protein P1/P2 family. As to quaternary structure, P1 and P2 exist as dimers at the large ribosomal subunit. Post-translationally, phosphorylated.

Plays an important role in the elongation step of protein synthesis. The protein is Large ribosomal subunit protein P2 of Branchiostoma floridae (Florida lancelet).